The chain runs to 283 residues: MRVYEALKWASSFLQENGRDENAGEIVLCHVLKTNRTGLLMNMREEITAEQETSFTEFIHKHVEGIPIQYMIGHEMFYGRSFFVNEEVLIPRPETEELIVGVLERIERHFGDEKLHVADIGTGSGAISITLALENKNLHVYTVDIAQESIEVAKENAKTLGAEVTFYHGDLLSPFYETGQKLDVVVSNPPYIPEEDWRGLSPVVKEHEPKRALVGGEDGLDFYRRFMEELPNVLQKKAIVAFEIGVGQGEDVKGLLQQAFPHAHVEVVFDINGKDRMVFAEIE.

S-adenosyl-L-methionine is bound by residues 121-125 (GTGSG), aspartate 144, and asparagine 188. 188 to 191 (NPPY) is a binding site for substrate.

It belongs to the protein N5-glutamine methyltransferase family. PrmC subfamily.

The enzyme catalyses L-glutaminyl-[peptide chain release factor] + S-adenosyl-L-methionine = N(5)-methyl-L-glutaminyl-[peptide chain release factor] + S-adenosyl-L-homocysteine + H(+). Functionally, methylates the class 1 translation termination release factors RF1/PrfA and RF2/PrfB on the glutamine residue of the universally conserved GGQ motif. This Bacillus anthracis protein is Release factor glutamine methyltransferase.